Reading from the N-terminus, the 151-residue chain is 6,7-dimethyl-8-ribityllumazine synthase (151 aa).

Residues phenylalanine 23, 55 to 57 (AYE), and 79 to 81 (AVI) contribute to the 5-amino-6-(D-ribitylamino)uracil site. Residue 84 to 85 (AT) participates in (2S)-2-hydroxy-3-oxobutyl phosphate binding. Histidine 87 functions as the Proton donor in the catalytic mechanism. Phenylalanine 111 contributes to the 5-amino-6-(D-ribitylamino)uracil binding site. Arginine 125 is a binding site for (2S)-2-hydroxy-3-oxobutyl phosphate.

This sequence belongs to the DMRL synthase family.

The enzyme catalyses (2S)-2-hydroxy-3-oxobutyl phosphate + 5-amino-6-(D-ribitylamino)uracil = 6,7-dimethyl-8-(1-D-ribityl)lumazine + phosphate + 2 H2O + H(+). It participates in cofactor biosynthesis; riboflavin biosynthesis; riboflavin from 2-hydroxy-3-oxobutyl phosphate and 5-amino-6-(D-ribitylamino)uracil: step 1/2. In terms of biological role, catalyzes the formation of 6,7-dimethyl-8-ribityllumazine by condensation of 5-amino-6-(D-ribitylamino)uracil with 3,4-dihydroxy-2-butanone 4-phosphate. This is the penultimate step in the biosynthesis of riboflavin. The sequence is that of 6,7-dimethyl-8-ribityllumazine synthase from Leptospira interrogans serogroup Icterohaemorrhagiae serovar Lai (strain 56601).